Reading from the N-terminus, the 306-residue chain is Curved DNA-binding protein (306 aa).

The region spanning 5-69 (DYYAIMGVKP…QRRAEYDQLW (65 aa)) is the J domain.

Its subcellular location is the cytoplasm. It is found in the nucleoid. DNA-binding protein that preferentially recognizes a curved DNA sequence. It is probably a functional analog of DnaJ; displays overlapping activities with DnaJ, but functions under different conditions, probably acting as a molecular chaperone in an adaptive response to environmental stresses other than heat shock. Lacks autonomous chaperone activity; binds native substrates and targets them for recognition by DnaK. Its activity is inhibited by the binding of CbpM. This chain is Curved DNA-binding protein, found in Citrobacter koseri (strain ATCC BAA-895 / CDC 4225-83 / SGSC4696).